We begin with the raw amino-acid sequence, 36 residues long: Photosystem I reaction center subunit VIII (36 aa).

A helical transmembrane segment spans residues 7–29 (PSILVPLVGIIFPGISMALLFIY).

This sequence belongs to the PsaI family.

It localises to the plastid. It is found in the chloroplast thylakoid membrane. May help in the organization of the PsaL subunit. The chain is Photosystem I reaction center subunit VIII from Gracilaria tenuistipitata var. liui (Red alga).